The following is a 314-amino-acid chain: Adenosine receptor A3 (314 aa).

The Extracellular portion of the chain corresponds to 1–14 (MAVNGTALLLANVT). N-linked (GlcNAc...) asparagine glycosylation is found at Asn-4 and Asn-12. The helical transmembrane segment at 15 to 37 (YITVEILIGLCAIVGNVLVIWVV) threads the bilayer. Topologically, residues 38–48 (KLNPSLQTTTF) are cytoplasmic. A helical transmembrane segment spans residues 49–72 (YFIVSLALADIAVGVLVMPLAIVI). The Extracellular segment spans residues 73 to 84 (SLGITIQFYNCL). Residues Cys-83 and Cys-166 are joined by a disulfide bond. A helical membrane pass occupies residues 85–106 (FMTCLLLIFTHASIMSLLAIAV). Over 107 to 126 (DRYLRVKLTVRYRRVTTQRR) the chain is Cytoplasmic. The chain crosses the membrane as a helical span at residues 127-148 (IWLALGLCWLVSFLVGLTPMFG). Residues 149 to 177 (WNMKLTSEHQRNVTFLSCQFSSVMRMDYM) lie on the Extracellular side of the membrane. N-linked (GlcNAc...) asparagine glycosylation is present at Asn-160. Residues 178–198 (VYFSFFTWILIPLVVMCAIYL) traverse the membrane as a helical segment. Over 199–231 (DIFYVIRNKLNQNFSSSKETGAFYGREFKTAKS) the chain is Cytoplasmic. A helical membrane pass occupies residues 232–255 (LFLVLFLFAFSWLPLSIINCITYF). Topologically, residues 256-261 (HGEVPQ) are extracellular. A helical transmembrane segment spans residues 262–284 (IILYLGILLSHANSMMNPIVYAY). Over 285 to 314 (KIKKFKETYLLIFKTYMICQSSDSLDSSTE) the chain is Cytoplasmic. Cys-303 carries S-palmitoyl cysteine lipidation.

Belongs to the G-protein coupled receptor 1 family.

Its subcellular location is the cell membrane. In terms of biological role, receptor for adenosine. The activity of this receptor is mediated by G proteins which inhibits adenylyl cyclase. The polypeptide is Adenosine receptor A3 (ADORA3) (Canis lupus familiaris (Dog)).